The following is a 977-amino-acid chain: Structural protein ORF43 (977 aa).

Positions aspartate 531–threonine 556 are disordered.

It belongs to the ascovirus HvAV ORF146 family.

It is found in the virion. The protein is Structural protein ORF43 of Noctuidae (owlet moths).